A 105-amino-acid polypeptide reads, in one-letter code: Large ribosomal subunit protein P1 (105 aa).

Position 1 is a blocked amino end (Met) (Met-1). Low complexity predominate over residues 65–76; it reads VAAPAGQQTQQA. The interval 65–105 is disordered; the sequence is VAAPAGQQTQQAAEKKEEKKEEEKKGPSEEEIGGGLSSLFG. The segment covering 77–92 has biased composition (basic and acidic residues); the sequence is AEKKEEKKEEEKKGPS.

The protein belongs to the eukaryotic ribosomal protein P1/P2 family. In terms of assembly, part of the 50S ribosomal subunit. Homodimer, it forms part of the ribosomal stalk which helps the ribosome interact with GTP-bound translation factors. Forms a heptameric uL10/P0(P1)2(P1)2(P1)2 complex, where uL10/P0 forms an elongated spine to which the P1 dimers bind in a sequential fashion.

Forms part of the ribosomal stalk, playing a central role in the interaction of the ribosome with GTP-bound translation factors. The protein is Large ribosomal subunit protein P1 of Sulfolobus acidocaldarius (strain ATCC 33909 / DSM 639 / JCM 8929 / NBRC 15157 / NCIMB 11770).